Reading from the N-terminus, the 335-residue chain is Phosphatidylinositol:ceramide inositolphosphotransferase (335 aa).

The Cytoplasmic segment spans residues 1–21 (MVLMGPHSALRLLPLKTQAIR). A helical transmembrane segment spans residues 22-42 (FVLLLLLSVLILAVALLVTNA). The Extracellular portion of the chain corresponds to 43–72 (RMPDPKVVRPLPDIGFEVFPKVGWLEHLTD). A helical membrane pass occupies residues 73 to 93 (VCIFILNFLSLLVVFKLYLLH). The Cytoplasmic portion of the chain corresponds to 94-98 (RQNEG). The chain crosses the membrane as a helical span at residues 99-119 (LDELQPFSCCPLIGKIIFGVW). Residues 120–139 (DSGRQSGIEKRDAHLIAWIR) are Extracellular-facing. The helical transmembrane segment at 140 to 160 (YFTTYFIVLLFRAIVVVMTSY) threads the bilayer. Over 161–179 (PATDNHCQNPMKITNPVKN) the chain is Cytoplasmic. Residues 180 to 200 (VIMTLVTFGSGSIHCGDLMFS) form a helical membrane-spanning segment. Over 201-203 (GHT) the chain is Extracellular. The active site involves histidine 202. Residues 204–224 (VSITLSLLVQWIYGSMLHWVF) form a helical membrane-spanning segment. The Cytoplasmic portion of the chain corresponds to 225–335 (RPASVLLVLL…GPACGNFGHW (111 aa)). Residues histidine 245 and aspartate 249 contribute to the active site.

It belongs to the sphingomyelin synthase family.

The protein localises to the membrane. Functionally, bidirectional lipid inositolphosphotransferase capable of converting phosphatidylinositol (PI) and ceramide to inositol-phosphorylceramide (IPC) and diacylglycerol (DAG) and vice versa. Direction is dependent on the relative concentrations of DAG and ceramide as phosphoinositol acceptors. Essential for viability of the pathogenic bloodstream stage of this human protozoan parasite and, consequently, can be considered as potential drug target. The protein is Phosphatidylinositol:ceramide inositolphosphotransferase of Trypanosoma cruzi (strain CL Brener).